Here is an 810-residue protein sequence, read N- to C-terminus: Hemoglobin-haptoglobin utilization protein B (810 aa).

An N-terminal signal peptide occupies residues 1 to 22; that stretch reads MPIPFKPVLAVAAIAQAFPAFA. The region spanning 34 to 166 is the TBDR plug domain; the sequence is NEITVTGTHK…LGGAVNYQTK (133 aa). One can recognise a TBDR beta-barrel domain in the interval 175 to 810; that stretch reads DKPYHLGIKG…SYNFTIEAKF (636 aa). A TonB C-terminal box motif is present at residues 793-810; sequence QRFTSPGRSYNFTIEAKF.

It belongs to the TonB-dependent receptor family.

It localises to the cell outer membrane. Its function is as follows. Acts as a receptor for hemoglobin or the hemoglobin/haptoglobin complex and is required for heme uptake. This chain is Hemoglobin-haptoglobin utilization protein B (hpuB), found in Neisseria meningitidis serogroup C.